Here is a 420-residue protein sequence, read N- to C-terminus: MAAITLLRSASLPGLSDALARDAAAVQHVCSSYLPNNKEKKRRWILCSLKYACLGVDPAPGEIARTSPVYSSLTVTPAGEAVISSEQKVYDVVLKQAALLKRHLRPQPHTIPIVPKDLDLPRNGLKQAYHRCGEICEEYAKTFYLGTMLMTEDRRRAIWAIYVWCRRTDELVDGPNASHITPSALDRWEKRLDDLFTGRPYDMLDAALSDTISKFPIDIQPFRDMIEGMRSDLRKTRYKNFDELYMYCYYVAGTVGLMSVPVMGIAPESKATTESVYSAALALGIANQLTNILRDVGEDARRGRIYLPQDELAEAGLSDEDIFNGVVTNKWRSFMKRQIKRARMFFEEAERGVTELSQASRWPVWASLLLYRQILDEIEANDYNNFTKRAYVGKAKKLLALPVAYGRSLLMPYSLRNSQK.

Residues 1 to 70 (MAAITLLRSA…GEIARTSPVY (70 aa)) constitute a chloroplast transit peptide.

It belongs to the phytoene/squalene synthase family. As to expression, expressed in leaves. Highly expressed in developing leaves. Expressed at low levels in roots.

The protein localises to the plastid. It is found in the chloroplast membrane. Its subcellular location is the chloroplast. It localises to the plastoglobule. It catalyses the reaction 2 (2E,6E,10E)-geranylgeranyl diphosphate = 15-cis-phytoene + 2 diphosphate. In terms of biological role, catalyzes the conversion of geranylgeranyl diphosphate to phytoene. Mediates the first committed step in carotenoid biosynthesis. The protein is Phytoene synthase 1, chloroplastic of Oryza sativa subsp. japonica (Rice).